Here is a 489-residue protein sequence, read N- to C-terminus: Tripartite motif-containing protein 10 (489 aa).

An RING-type zinc finger spans residues 16–61 (CPVCQGTLREPVTIDCGHNFCRVCLTRYLEITSPDPEEPPTCPLCK). The B box-type zinc finger occupies 94 to 135 (DEEDVCPEHGEKVYFFCEDDEMQLCVVCREAWEHRAHTVRFL). The Zn(2+) site is built by cysteine 99, histidine 102, cysteine 121, and histidine 127. The stretch at 142-245 (YREQIQKCLE…IEELEEKKER (104 aa)) forms a coiled coil. One can recognise a B30.2/SPRY domain in the interval 292–486 (REMKMFLEKL…FSLSSQEGAA (195 aa)).

This sequence belongs to the TRIM/RBCC family. As to quaternary structure, interacts with IFNAR1; this interaction prevents association of IFNAR1 with TYK2.

The protein localises to the cytoplasm. Its function is as follows. E3 ligase that plays an essential role in the differentiation and survival of terminal erythroid cells. May directly bind to PTEN and promote its ubiquitination, resulting in its proteasomal degradation and activation of hypertrophic signaling. In addition, plays a role in immune response regulation by repressing the phosphorylation of STAT1 and STAT2 in the interferon/JAK/STAT signaling pathway independent of its E3 ligase activity. Mechanistically, interacts with the intracellular domain of IFNAR1 and thereby inhibits the association between TYK2 and IFNAR1. This Bos taurus (Bovine) protein is Tripartite motif-containing protein 10 (TRIM10).